A 946-amino-acid polypeptide reads, in one-letter code: Clumping factor A (946 aa).

The N-terminal stretch at 1–39 is a signal peptide; it reads MNMKKKEKHAIRKKSIGVASVLVGTLIGFGLLSSKEADA. Positions 9–20 match the YSIRK-G/S signaling motif motif; it reads HAIRKKSIGVAS. 2 disordered regions span residues 34-199 and 528-917; these read SKEA…SNKD and FNNG…SEDE. The interval 40-542 is ligand binding A region; that stretch reads SENSVTQSDS…GSGDGIDKPV (503 aa). Positions 47–65 are enriched in low complexity; that stretch reads SDSASNESKSNDSSSVSAA. Over residues 71 to 111 the composition is skewed to polar residues; it reads TNVSDTKTSSNTNNGETSVAQNPAQQETTQSALTNATTEET. Low complexity-rich tracts occupy residues 117–131 and 142–161; these read ATTA…ATTQ and NQTS…SVNS. The span at 162–199 shows a compositional bias: polar residues; sequence PQNSTNAENVSTTQDTSTEATPSNNESAPQSTDASNKD. A compositionally biased stretch (acidic residues) spans 546–564; sequence QPDEPGEIEPIPEDSDSDP. The span at 565 to 597 shows a compositional bias: low complexity; sequence GSDSGSDSNSDSGSDSGSDSTSDSGSDSASDSD. A compositionally biased stretch (acidic residues) spans 598 to 874; the sequence is SASDSDSASD…DSDSESDSNS (277 aa). Residues 875–893 are compositionally biased toward low complexity; it reads DSESGSNNNVVPPNSPKNG. Positions 900-909 are enriched in basic and acidic residues; the sequence is NEAKDSKEPL. An LPXTG sorting signal motif is present at residues 909–913; the sequence is LPDTG. Threonine 912 is subject to Pentaglycyl murein peptidoglycan amidated threonine. A propeptide spans 913-946 (removed by sortase); that stretch reads GSEDEANTSLIWGLLASIGSLLLFRRKKENKDKK.

The protein belongs to the serine-aspartate repeat-containing protein (SDr) family.

It localises to the secreted. The protein resides in the cell wall. Cell surface-associated protein implicated in virulence. Promotes bacterial attachment exclusively to the gamma-chain of human fibrinogen. Induces formation of bacterial clumps. The sequence is that of Clumping factor A (clfA) from Staphylococcus aureus (strain MW2).